A 303-amino-acid polypeptide reads, in one-letter code: Putative 1-phosphofructokinase (303 aa).

ATP-binding positions include 217–222 (SDGDKG) and 249–250 (GD). D250 (proton acceptor) is an active-site residue.

The protein belongs to the carbohydrate kinase PfkB family.

It catalyses the reaction beta-D-fructose 1-phosphate + ATP = beta-D-fructose 1,6-bisphosphate + ADP + H(+). Its function is as follows. Catalyzes the ATP-dependent phosphorylation of fructose-l-phosphate to fructose-l,6-bisphosphate. This chain is Putative 1-phosphofructokinase (fruK), found in Mycoplasma genitalium (strain ATCC 33530 / DSM 19775 / NCTC 10195 / G37) (Mycoplasmoides genitalium).